The sequence spans 151 residues: Deoxyuridine 5'-triphosphate nucleotidohydrolase (151 aa).

Substrate is bound by residues Arg-70 to Gly-72, Asn-83, Leu-87 to Asp-89, and Met-97.

Belongs to the dUTPase family. Mg(2+) serves as cofactor.

It carries out the reaction dUTP + H2O = dUMP + diphosphate + H(+). The protein operates within pyrimidine metabolism; dUMP biosynthesis; dUMP from dCTP (dUTP route): step 2/2. Its function is as follows. This enzyme is involved in nucleotide metabolism: it produces dUMP, the immediate precursor of thymidine nucleotides and it decreases the intracellular concentration of dUTP so that uracil cannot be incorporated into DNA. This Yersinia enterocolitica serotype O:8 / biotype 1B (strain NCTC 13174 / 8081) protein is Deoxyuridine 5'-triphosphate nucleotidohydrolase.